The chain runs to 218 residues: Carnitine transport permease protein OpuCB (218 aa).

The ABC transmembrane type-1 domain maps to 19-198 (TWQHLFISLS…ILALVVEFAL (180 aa)). 5 helical membrane-spanning segments follow: residues 23–43 (LFISLSAVILGIAVAVPTGIL), 48–68 (PKVANFVIGVVSVLQTVPSLA), 79–101 (VGTLPAIIALFIYALLPILRNTF), 149–169 (VIAWATLASYIGAGGLGDFIF), and 179–199 (LILGGAIPVTILALVVEFALG).

It belongs to the binding-protein-dependent transport system permease family. The complex is composed of two ATP-binding proteins (OpuCA), two transmembrane proteins (OpuCB and OpuCD) and a solute-binding protein (OpuCC).

The protein resides in the cell membrane. Functionally, part of the ABC transporter complex OpuCABCD involved in carnitine uptake. Probably responsible for the translocation of the substrate across the membrane. Involved, with BetL and GbuABC, in osmoprotection and cryoprotection of Listeria. This chain is Carnitine transport permease protein OpuCB (opuCB), found in Listeria monocytogenes.